The chain runs to 1144 residues: Guanine nucleotide-binding protein G(s) subunit alpha isoforms XLas (1144 aa).

4 disordered regions span residues 1–186 (MGML…LAPG), 316–558 (DDDT…PAAG), 622–657 (SASA…SAWP), and 735–772 (RSRS…DKKR). The span at 31–46 (LEAQGAAAPGAGVGPA) shows a compositional bias: low complexity. The span at 343 to 356 (KSEHAKRPPLERQA) shows a compositional bias: basic and acidic residues. Residues 358–369 (ETGNSPISSTTA) are compositionally biased toward polar residues. Over residues 370-381 (EEAKVPSLERGE) the composition is skewed to basic and acidic residues. Composition is skewed to low complexity over residues 467 to 499 (PAAA…AAEA) and 518 to 558 (EPAA…PAAG). A compositionally biased stretch (pro residues) spans 644–654 (PPTPRPAPRPS). A compositionally biased stretch (basic and acidic residues) spans 743–767 (KAKDPMEERRKQMRKEAMEMREQKR). Residues 745 to 772 (KDPMEERRKQMRKEAMEMREQKRADKKR) are a coiled coil. In terms of domain architecture, G-alpha spans 789–1144 (CTHRLLLLGA…RMHLRQYELL (356 aa)). Residues 792-805 (RLLLLGAGESGKST) form a G1 motif region. 797 to 805 (GAGESGKST) contributes to the GTP binding site. S804 serves as a coordination point for Mg(2+). A disordered region spans residues 818–840 (FNGEGGEEDPQAARSNSDGEKAT). A coiled-coil region spans residues 837–863 (EKATKVQDIKNNLKEAIETIVAAMSNL). The interval 946–954 (DLPRCRVLT) is G2 motif. GTP-binding positions include 947–954 (LPRCRVLT), 973–977 (DVGGQ), and 1042–1045 (NKQD). R951 carries the ADP-ribosylarginine; by cholera toxin modification. T954 provides a ligand contact to Mg(2+). Residues 969 to 978 (FHMFDVGGQR) are G3 motif. The tract at residues 1038-1045 (ILFLNKQD) is G4 motif. S1102 carries the post-translational modification Phosphoserine. Residues 1114–1119 (TCAVDT) form a G5 motif region. A1116 is a GTP binding site.

The protein belongs to the G-alpha family. G(s) subfamily. G proteins are composed of 3 units; alpha, beta and gamma. The alpha chain contains the guanine nucleotide binding site. Interacts through its N-terminal region with ALEX which is produced from the same locus in a different open reading frame. This interaction may inhibit its adenylyl cyclase-stimulating activity. Interacts with MAGED2. As to expression, enriched in neuroendocrine tissues with a particularly high level of expression in pituitary where it is abundant in intermediate and anterior lobes. In adrenal gland, found in central region containing medullary chromaffin cells but not in cortex. In cerebellum, strongly expressed in perikarya of Purkinje cells. Not detected in liver, kidney or neurohypophysis.

It localises to the cell membrane. It is found in the apical cell membrane. In terms of biological role, guanine nucleotide-binding proteins (G proteins) function as transducers in numerous signaling pathways controlled by G protein-coupled receptors (GPCRs). Signaling involves the activation of adenylyl cyclases, resulting in increased levels of the signaling molecule cAMP. GNAS functions downstream of several GPCRs, including beta-adrenergic receptors. XLas isoforms interact with the same set of receptors as Gnas isoforms. This chain is Guanine nucleotide-binding protein G(s) subunit alpha isoforms XLas, found in Rattus norvegicus (Rat).